The sequence spans 172 residues: 3-hydroxydecanoyl-[acyl-carrier-protein] dehydratase (172 aa).

His-71 is a catalytic residue.

This sequence belongs to the thioester dehydratase family. FabA subfamily. As to quaternary structure, homodimer.

It is found in the cytoplasm. The enzyme catalyses a (3R)-hydroxyacyl-[ACP] = a (2E)-enoyl-[ACP] + H2O. It catalyses the reaction (3R)-hydroxydecanoyl-[ACP] = (2E)-decenoyl-[ACP] + H2O. It carries out the reaction (2E)-decenoyl-[ACP] = (3Z)-decenoyl-[ACP]. It participates in lipid metabolism; fatty acid biosynthesis. In terms of biological role, necessary for the introduction of cis unsaturation into fatty acids. Catalyzes the dehydration of (3R)-3-hydroxydecanoyl-ACP to E-(2)-decenoyl-ACP and then its isomerization to Z-(3)-decenoyl-ACP. Can catalyze the dehydratase reaction for beta-hydroxyacyl-ACPs with saturated chain lengths up to 16:0, being most active on intermediate chain length. The sequence is that of 3-hydroxydecanoyl-[acyl-carrier-protein] dehydratase from Escherichia fergusonii (strain ATCC 35469 / DSM 13698 / CCUG 18766 / IAM 14443 / JCM 21226 / LMG 7866 / NBRC 102419 / NCTC 12128 / CDC 0568-73).